Reading from the N-terminus, the 734-residue chain is Photosystem I P700 chlorophyll a apoprotein A2 (734 aa).

A run of 8 helical transmembrane segments spans residues isoleucine 46–alanine 69, leucine 135–glutamine 158, leucine 175–isoleucine 199, isoleucine 273–tyrosine 291, isoleucine 330–tyrosine 353, alanine 369–isoleucine 395, alanine 417–histidine 439, and phenylalanine 517–valine 535. Positions 559 and 568 each coordinate [4Fe-4S] cluster. 2 consecutive transmembrane segments (helical) span residues alanine 575–tryptophan 596 and leucine 643–isoleucine 665. Residues histidine 654, methionine 662, and tyrosine 670 each contribute to the chlorophyll a site. Tryptophan 671 serves as a coordination point for phylloquinone. Residues leucine 707–alanine 727 traverse the membrane as a helical segment.

Belongs to the PsaA/PsaB family. The PsaA/B heterodimer binds the P700 chlorophyll special pair and subsequent electron acceptors. PSI consists of a core antenna complex that captures photons, and an electron transfer chain that converts photonic excitation into a charge separation. The eukaryotic PSI reaction center is composed of at least 11 subunits. P700 is a chlorophyll a/chlorophyll a' dimer, A0 is one or more chlorophyll a, A1 is one or both phylloquinones and FX is a shared 4Fe-4S iron-sulfur center. serves as cofactor.

The protein localises to the plastid. It localises to the chloroplast thylakoid membrane. The catalysed reaction is reduced [plastocyanin] + hnu + oxidized [2Fe-2S]-[ferredoxin] = oxidized [plastocyanin] + reduced [2Fe-2S]-[ferredoxin]. Its function is as follows. PsaA and PsaB bind P700, the primary electron donor of photosystem I (PSI), as well as the electron acceptors A0, A1 and FX. PSI is a plastocyanin-ferredoxin oxidoreductase, converting photonic excitation into a charge separation, which transfers an electron from the donor P700 chlorophyll pair to the spectroscopically characterized acceptors A0, A1, FX, FA and FB in turn. Oxidized P700 is reduced on the lumenal side of the thylakoid membrane by plastocyanin. This chain is Photosystem I P700 chlorophyll a apoprotein A2, found in Vitis vinifera (Grape).